Reading from the N-terminus, the 547-residue chain is Chaperonin GroEL (547 aa).

ATP is bound by residues 30-33 (TLGP), lysine 51, 87-91 (DGTTT), glycine 415, 479-481 (NAA), and aspartate 495.

The protein belongs to the chaperonin (HSP60) family. In terms of assembly, forms a cylinder of 14 subunits composed of two heptameric rings stacked back-to-back. Interacts with the co-chaperonin GroES.

It is found in the cytoplasm. It catalyses the reaction ATP + H2O + a folded polypeptide = ADP + phosphate + an unfolded polypeptide.. Its function is as follows. Together with its co-chaperonin GroES, plays an essential role in assisting protein folding. The GroEL-GroES system forms a nano-cage that allows encapsulation of the non-native substrate proteins and provides a physical environment optimized to promote and accelerate protein folding. The protein is Chaperonin GroEL of Bordetella pertussis (strain Tohama I / ATCC BAA-589 / NCTC 13251).